Reading from the N-terminus, the 508-residue chain is MSRFVQDLSKAMSQDGASQFQEVILQELELSVKKELEKILTTATSHEYEHTKKDLDGFRKLYHRFLQEKGPSVDWGKIQRPPEDSIQPYEKIKARGLPDNISSVLNKLVVVKLNGGLGTSMGCKGPKSLIGVRNENTFLDLTVQQIEHLNKSYNTDVPLVLMNSFNTDEDTKKILQKYNHCRVKIYTFNQSRYPRINKESLLPVAKDVSSSGESTEAWYPPGHGDIYASFYNSGLLDTFLEEGKEYIFVSNIDNLGATVDLYILNHLMNPPNGKRCEFVMEVTNKTRADVKGGTLTQYEGKLRLVEIAQVPKAHVDEFKSVSKFKIFNTNNLWISLAAVKRLQEQNAIDMEIIVNPKTLDGGLNVIQLETAVGAAIKSFENSLGINVPRSRFLPVKTTSDLLLVMSNLYSLNAGSLTMSEKREFPTVPLVKLGSSFTKVQDYLRRFESIPDMLELDHLTVSGDVTFGKNVSLKGTVIIIANHGDRIDIPPGAVLENKIVSGNLRILDH.

Phosphoserine is present on Ser-13. Residues 113 to 116, Lys-127, Gln-190, and Gly-222 each bind UTP; that span reads LNGG. Position 115 to 116 (115 to 116) interacts with substrate; it reads GG. Lys-127 provides a ligand contact to Mg(2+). Residues His-223 and 251–253 contribute to the substrate site; that span reads NID. Residues Asp-253 and Lys-396 each coordinate UTP. Asp-253 contacts Mg(2+). Lys-396 is a catalytic residue. Thr-426 carries the phosphothreonine modification. Ser-434 is subject to Phosphoserine. Lys-438 carries the N6-acetyllysine modification. Ser-448 and Ser-461 each carry phosphoserine. An oligomerization region spans residues 457–508; the sequence is HLTVSGDVTFGKNVSLKGTVIIIANHGDRIDIPPGAVLENKIVSGNLRILDH. The interval 502–503 is critical for end-to-end subunit interaction; sequence NL.

It belongs to the UDPGP type 1 family. Homooctamer.

It is found in the cytoplasm. It carries out the reaction alpha-D-glucose 1-phosphate + UTP + H(+) = UDP-alpha-D-glucose + diphosphate. It functions in the pathway glycan biosynthesis; glycogen biosynthesis. Functionally, UTP--glucose-1-phosphate uridylyltransferase catalyzing the conversion of glucose-1-phosphate into UDP-glucose, a crucial precursor for the production of glycogen. The chain is UTP--glucose-1-phosphate uridylyltransferase (UGP2) from Cricetulus griseus (Chinese hamster).